Reading from the N-terminus, the 368-residue chain is Probable protein phosphatase 2C 58 (368 aa).

Residues 23–329 form the PPM-type phosphatase domain; sequence KFGLSSMQGW…DNMTMILVQF (307 aa). Residues Asp57, Gly58, Asp272, and Asp320 each coordinate Mn(2+). Residues 336–368 form a disordered region; it reads NKNVSPAEQSAADKQPTGDTHWSEIHVTEESSS. Residues 356 to 368 are compositionally biased toward basic and acidic residues; sequence HWSEIHVTEESSS.

It belongs to the PP2C family. It depends on Mg(2+) as a cofactor. Mn(2+) serves as cofactor.

It catalyses the reaction O-phospho-L-seryl-[protein] + H2O = L-seryl-[protein] + phosphate. It carries out the reaction O-phospho-L-threonyl-[protein] + H2O = L-threonyl-[protein] + phosphate. This Oryza sativa subsp. japonica (Rice) protein is Probable protein phosphatase 2C 58.